Here is a 297-residue protein sequence, read N- to C-terminus: Succinate dehydrogenase [ubiquinone] iron-sulfur subunit, mitochondrial (297 aa).

One can recognise a 2Fe-2S ferredoxin-type domain in the interval 47–140 (KKFEIYRWNP…SLKVYPLPHM (94 aa)). Positions 100, 105, 108, and 120 each coordinate [2Fe-2S] cluster. In terms of domain architecture, 4Fe-4S ferredoxin-type spans 185-215 (DRSKLDGLYECILCACCSTSCPSYWWNAEKY). Residues cysteine 195, cysteine 198, and cysteine 201 each coordinate [4Fe-4S] cluster. Cysteine 205 is a [3Fe-4S] cluster binding site. Tryptophan 210 is an a ubiquinone binding site. [3Fe-4S] cluster contacts are provided by cysteine 252 and cysteine 258. Residue cysteine 262 coordinates [4Fe-4S] cluster.

Belongs to the succinate dehydrogenase/fumarate reductase iron-sulfur protein family. Component of complex II composed of four subunits: a flavoprotein (FP), an iron-sulfur protein (IP), and a cytochrome b composed of a large and a small subunit. [2Fe-2S] cluster is required as a cofactor. It depends on [3Fe-4S] cluster as a cofactor. Requires [4Fe-4S] cluster as cofactor. As to expression, most abundant in the adult thorax and low in abdominal tissues.

The protein resides in the mitochondrion inner membrane. The enzyme catalyses a quinone + succinate = fumarate + a quinol. Its pathway is carbohydrate metabolism; tricarboxylic acid cycle; fumarate from succinate (eukaryal route): step 1/1. In terms of biological role, iron-sulfur protein (IP) subunit of succinate dehydrogenase (SDH) that is involved in complex II of the mitochondrial electron transport chain and is responsible for transferring electrons from succinate to ubiquinone (coenzyme Q). This is Succinate dehydrogenase [ubiquinone] iron-sulfur subunit, mitochondrial (SdhB) from Drosophila melanogaster (Fruit fly).